A 740-amino-acid polypeptide reads, in one-letter code: D-ornithine 4,5-aminomutase subunit beta (740 aa).

Residues glutamate 81, tyrosine 160, histidine 182, and 294 to 296 (RAQ) contribute to the substrate site. In terms of domain architecture, B12-binding spans 602-739 (PLKIVAATVG…VKKRREMREG (138 aa)). Adenosylcob(III)alamin is bound by residues 614 to 616 (EHS) and histidine 615. N6-(pyridoxal phosphate)lysine is present on lysine 626. Adenosylcob(III)alamin is bound by residues 664-669 (STIISH), threonine 700, and serine 720.

As to quaternary structure, heterotetramer of 2 alpha (OraS) and 2 beta (OraE) subunits. It depends on adenosylcob(III)alamin as a cofactor. Pyridoxal 5'-phosphate serves as cofactor.

The enzyme catalyses D-ornithine = (2R,4S)-2,4-diaminopentanoate. With respect to regulation, increased activity in the presence of dithiothreitol (DTT) in vitro. Inhibited by 1 mM potassium phosphate and potassium chloride. Inhibited by L-alpha-ornithine, D,L-alpha-lysine, L-beta-lysine (50%-60%), L-alpha-lysine (26%) and by delta-amino-n-valeric acid to a lesser extent. Significant decrease in activity is observed in the presence of 0.2 mM p-chloromercuribenzoate, N-ethylmaleimide and also by 2 mM iodoacetate to a lesser extent but not inhibited by arsenite. Its function is as follows. Component of a complex that catalyzes the reversible migration of the omega amino group of D-ornithine to C-4 to form (2R,4S)-2,4-diaminopentanoic acid. OraE may be the catalytic subunit. Active only on D-ornithine and 2,4-diaminopentanoic acid but not active on L-ornithine, L-beta-lysine, L-alpha-lysine or D-alpha-lysine. This is D-ornithine 4,5-aminomutase subunit beta (oraE) from Acetoanaerobium sticklandii (strain ATCC 12662 / DSM 519 / JCM 1433 / CCUG 9281 / NCIMB 10654 / HF) (Clostridium sticklandii).